Here is a 702-residue protein sequence, read N- to C-terminus: Serotransferrin-A (702 aa).

An N-terminal signal peptide occupies residues 1–19; that stretch reads MDLSLRVALCLSMLALCLA. Transferrin-like domains follow at residues 26–340 and 353–685; these read VRWC…ALKE and VRWC…SLNK. Intrachain disulfides connect Cys-29-Cys-64 and Cys-39-Cys-55. The Fe(3+) site is built by Asp-79 and Tyr-111. Cystine bridges form between Cys-134/Cys-217, Cys-179/Cys-192, and Cys-245/Cys-259. The hydrogencarbonate site is built by Thr-136, Lys-140, Ala-142, and Gly-143. Residue Tyr-211 coordinates Fe(3+). His-267 is a Fe(3+) binding site. Residues 340–349 are connecting region; sequence EGVKEDDSAA. 2 cysteine pairs are disulfide-bonded: Cys-356–Cys-388 and Cys-366–Cys-379. Fe(3+) is bound by residues Asp-403 and Tyr-442. 7 cysteine pairs are disulfide-bonded: Cys-413/Cys-697, Cys-431/Cys-658, Cys-465/Cys-544, Cys-489/Cys-686, Cys-499/Cys-513, Cys-510/Cys-527, and Cys-584/Cys-598. Residues Thr-467, Arg-471, Ala-473, and Gly-474 each coordinate hydrogencarbonate. Tyr-538 serves as a coordination point for Fe(3+). Residue His-606 coordinates Fe(3+).

This sequence belongs to the transferrin family. In terms of assembly, monomer. Plasma.

It localises to the secreted. Functionally, transferrins are iron binding transport proteins which can bind two Fe(3+) ions in association with the binding of an anion, usually bicarbonate. It is responsible for the transport of iron from sites of absorption and heme degradation to those of storage and utilization. Serum transferrin may also have a further role in stimulating cell proliferation. The chain is Serotransferrin-A (tf-a) from Xenopus laevis (African clawed frog).